Reading from the N-terminus, the 197-residue chain is Large ribosomal subunit protein uL10 (197 aa).

Positions 162 to 197 (READGETAETPAQETASDDSKSTKAEASDASTTENK) are disordered. Basic and acidic residues predominate over residues 179 to 188 (DDSKSTKAEA).

The protein belongs to the universal ribosomal protein uL10 family. In terms of assembly, part of the ribosomal stalk of the 50S ribosomal subunit. The N-terminus interacts with L11 and the large rRNA to form the base of the stalk. The C-terminus forms an elongated spine to which L12 dimers bind in a sequential fashion forming a multimeric L10(L12)X complex.

Its function is as follows. Forms part of the ribosomal stalk, playing a central role in the interaction of the ribosome with GTP-bound translation factors. The chain is Large ribosomal subunit protein uL10 from Oenococcus oeni (strain ATCC BAA-331 / PSU-1).